The following is a 377-amino-acid chain: Tubulin--tyrosine ligase (377 aa).

The region spanning 3 to 370 (TFVVRDENSS…PPDVEQPQTQ (368 aa)) is the TTL domain.

The protein belongs to the tubulin--tyrosine ligase family. As to quaternary structure, monomer. Mg(2+) is required as a cofactor. Requires K(+) as cofactor.

The enzyme catalyses C-terminal L-alpha-aminoacyl-L-glutamyl-L-glutamyl-[tubulin] + L-tyrosine + ATP = C-terminal L-alpha-aminoacyl-L-glutamyl-L-glutamyl-L-tyrosyl-[tubulin] + ADP + phosphate + H(+). In terms of biological role, catalyzes the post-translational addition of a tyrosine to the C-terminal end of detyrosinated alpha-tubulin. This chain is Tubulin--tyrosine ligase (TTL), found in Homo sapiens (Human).